Consider the following 353-residue polypeptide: Phospho-furanose lactonase (353 aa).

Residues H24, H26, K153, H186, and H214 each coordinate Zn(2+). An N6-carboxylysine modification is found at K153. 244-245 (KY) provides a ligand contact to substrate. A Zn(2+)-binding site is contributed by D272. 275 to 278 (RILY) is a binding site for substrate.

The protein belongs to the metallo-dependent hydrolases superfamily. Phosphotriesterase family. Zn(2+) is required as a cofactor.

It carries out the reaction a 1,4-lactone + H2O = a 4-hydroxyacid + H(+). The enzyme catalyses D-xylono-1,4-lactone 5-phosphate + H2O = 5-phospho-D-xylonate + H(+). It catalyses the reaction L-arabino-1,4-lactone 5-phosphate + H2O = 5-phospho-L-arabinonate + H(+). Functionally, catalyzes the hydrolysis of D-xylono-1,4-lactone-5-phosphate and L-arabino-1,4-lactone-5-phosphate. Also able to hydrolyze carboxy 1,4-lactones. In Mycoplasmopsis synoviae (strain 53) (Mycoplasma synoviae), this protein is Phospho-furanose lactonase.